The sequence spans 362 residues: Aspartate-semialdehyde dehydrogenase (362 aa).

The NADP(+) site is built by T15, G16, A17, V18, S40, S43, L87, and D88. C154 functions as the Acyl-thioester intermediate in the catalytic mechanism. G186 is a binding site for NADP(+). Catalysis depends on H251, which acts as the Proton acceptor. N340 provides a ligand contact to NADP(+).

Belongs to the aspartate-semialdehyde dehydrogenase family. In terms of assembly, homotetramer; dimer of dimers.

The protein localises to the cytoplasm. It is found in the cytosol. It localises to the nucleus. The enzyme catalyses L-aspartate 4-semialdehyde + phosphate + NADP(+) = 4-phospho-L-aspartate + NADPH + H(+). The protein operates within amino-acid biosynthesis; L-methionine biosynthesis via de novo pathway; L-homoserine from L-aspartate: step 2/3. Its pathway is amino-acid biosynthesis; L-threonine biosynthesis; L-threonine from L-aspartate: step 2/5. Its function is as follows. Catalyzes the NADPH-dependent formation of L-aspartate 4-semialdehyde (L-ASA) by the reductive dephosphorylation of 4-phospho-L-aspartate. Mediates the second step in the biosynthesis of amino acids that derive from aspartate (the aspartate family of amino acids), including methioinine and threonine, the latter of which is a precursor to isoleucine. The polypeptide is Aspartate-semialdehyde dehydrogenase (Trichophyton rubrum (strain ATCC MYA-4607 / CBS 118892) (Athlete's foot fungus)).